The chain runs to 510 residues: Sulfoquinovosyl transferase SQD2 (510 aa).

The transit peptide at Met-1 to Arg-83 directs the protein to the chloroplast. Position 88 is a phosphoserine (Ser-88). A helical transmembrane segment spans residues Pro-198–Met-218.

Belongs to the glycosyltransferase group 1 family. Glycosyltransferase 4 subfamily.

Its subcellular location is the plastid. It is found in the chloroplast membrane. It catalyses the reaction UDP-alpha-D-6-sulfoquinovose + a 1,2-diacyl-sn-glycerol = a 6-sulfo-alpha-D-quinovosyldiacylglycerol + UDP + H(+). It functions in the pathway glycolipid biosynthesis. Its function is as follows. Catalyzes the transfer of the sulfoquinovose moiety from UDP-sulfoquinovose to diacylglycerol during sulfolipid biosynthesis. Sulfolipid contributes to maintaining a negatively charged lipid-water interface, a requirement for proper function of photosynthetic membranes. Sulfolipid may also function as a substitute of anionic phospholipids under phosphate-limited growth conditions. The polypeptide is Sulfoquinovosyl transferase SQD2 (Arabidopsis thaliana (Mouse-ear cress)).